The chain runs to 180 residues: Der GTPase-activating protein YihI (180 aa).

Positions 1-10 are enriched in polar residues; sequence MKQPARTSQV. Disordered regions lie at residues 1-102 and 158-180; these read MKQP…PRLT and DAEDEKAEEDMYRLLKGSHRTPE. Over residues 21–32 the composition is skewed to basic and acidic residues; sequence TREEINQEARDR. The segment covering 45–54 has biased composition (polar residues); the sequence is SRANPATVSQ. Over residues 55 to 67 the composition is skewed to basic and acidic residues; that stretch reads KGDKSQSVKDPRI. Residues 84-93 show a composition bias toward low complexity; that stretch reads PANPVKAAKP.

Belongs to the YihI family. Interacts with Der.

Functionally, a GTPase-activating protein (GAP) that modifies Der/EngA GTPase function. May play a role in ribosome biogenesis. The chain is Der GTPase-activating protein YihI from Erwinia tasmaniensis (strain DSM 17950 / CFBP 7177 / CIP 109463 / NCPPB 4357 / Et1/99).